The chain runs to 176 residues: Inner membrane-spanning protein YciB (176 aa).

6 helical membrane passes run 3 to 23 (FLFD…WGIF), 24 to 44 (TATA…AFRH), 49 to 69 (TMLW…LVLH), 72 to 92 (KFIQ…LLAA), 121 to 141 (VAWA…VHNF), and 149 to 169 (FKLF…SLWL).

The protein belongs to the YciB family.

The protein localises to the cell inner membrane. In terms of biological role, plays a role in cell envelope biogenesis, maintenance of cell envelope integrity and membrane homeostasis. In Burkholderia orbicola (strain MC0-3), this protein is Inner membrane-spanning protein YciB.